The sequence spans 143 residues: Transcriptional regulator MraZ (143 aa).

2 SpoVT-AbrB domains span residues 5 to 47 (TFTP…PKAE) and 76 to 119 (ADEQ…DAES).

The protein belongs to the MraZ family. As to quaternary structure, forms oligomers.

It is found in the cytoplasm. The protein localises to the nucleoid. The chain is Transcriptional regulator MraZ from Corynebacterium jeikeium (strain K411).